The chain runs to 816 residues: H(+)/Cl(-) exchange transporter 5 (816 aa).

Topologically, residues 1-124 are cytoplasmic; that stretch reads MAMWQGAMDN…WALIHSVSDA (124 aa). 2 helical membrane-spanning segments follow: residues 125 to 162 and 208 to 231; these read FSGW…ICTG and VNYF…VKVF. A Selectivity filter part_1 motif is present at residues 237-241; it reads GSGIP. S238 provides a ligand contact to chloride. Positions 240-247 form an intramembrane region, helical; it reads IPEIKTIL. A run of 2 helical transmembrane segments spans residues 256-275 and 281-300; these read LGKW…VSSG and EGPL…HCFN. A Selectivity filter part_2 motif is present at residues 279-283; it reads GKEGP. Intramembrane regions (helical) lie at residues 312-324 and 328-336; these read VLSA…VSVA and PIGGVLFSL. Transmembrane regions (helical) follow at residues 348-366, 389-414, 422-442, 498-518, and 523-542; these read LWRS…RSIN, LVPF…IAWC, LGKY…ILAF, MWQL…TFGM, and GLFI…LGVG. Residues 523 to 527 carry the Selectivity filter part_3 motif; sequence GLFIP. Chloride is bound at residue F525. The segment at residues 570–584 is an intramembrane region (helical); the sequence is GLYAMVGAAACLGGV. The segment at residues 585-587 is an intramembrane region (note=Loop between two helices); the sequence is TRM. The helical intramembrane region spans 588–599; that stretch reads TVSLVVIMFELT. The note=Loop between two helices intramembrane region spans 600-604; sequence GGLEY. The helical transmembrane segment at 605–622 threads the bilayer; it reads IVPLMAAAMTSKWVADAL. Topologically, residues 623–816 are cytoplasmic; the sequence is GREGIYDAHI…NQDPDSILFN (194 aa). Residue Y628 coordinates chloride. 2 consecutive CBS domains span residues 656–720 and 752–812; these read MKPR…ARKK and ILDL…DPDS. Residues T666, 687–689, and 794–797 contribute to the ATP site; these read YSG and TKKD.

It belongs to the chloride channel (TC 2.A.49) family. ClC-5/CLCN5 subfamily. As to quaternary structure, interacts with NEDD4 and NEDD4L. Post-translationally, ubiquitinated by NEDD4L in the presence of albumin; which promotes endocytosis and proteasomal degradation.

Its subcellular location is the golgi apparatus membrane. The protein localises to the endosome membrane. The protein resides in the cell membrane. The enzyme catalyses 2 chloride(in) + H(+)(out) = 2 chloride(out) + H(+)(in). Functionally, proton-coupled chloride transporter. Functions as antiport system and exchanges chloride ions against protons. Important for normal acidification of the endosome lumen. May play an important role in renal tubular function. The CLC channel family contains both chloride channels and proton-coupled anion transporters that exchange chloride or another anion for protons. The absence of conserved gating glutamate residues is typical for family members that function as channels. The sequence is that of H(+)/Cl(-) exchange transporter 5 (CLCN5) from Pongo abelii (Sumatran orangutan).